Here is a 730-residue protein sequence, read N- to C-terminus: Patatin-like phospholipase domain-containing protein CIMG_04897 (730 aa).

The span at 1–11 (MTANSSRRRLQ) shows a compositional bias: basic residues. Residues 1 to 26 (MTANSSRRRLQMKSPRTDGDEKEEDY) are disordered. Residues 97-117 (WPFLLFVLSWIVFLGALYILT) form a helical membrane-spanning segment. The PNPLA domain occupies 281 to 472 (LCLSGGATLA…RTDIPLKALD (192 aa)). A GXSXG motif is present at residues 312–316 (GTSGG). The active-site Nucleophile is the serine 314. The active-site Proton acceptor is aspartate 459. The interval 667-730 (GHFREAPTSH…QGQSSGTKIG (64 aa)) is disordered. Over residues 721–730 (QGQSSGTKIG) the composition is skewed to polar residues.

The protein belongs to the PLPL family.

The protein localises to the membrane. Probable lipid hydrolase. This chain is Patatin-like phospholipase domain-containing protein CIMG_04897, found in Coccidioides immitis (strain RS) (Valley fever fungus).